The sequence spans 134 residues: Large ribosomal subunit protein uL18 (134 aa).

The tract at residues 1–25 (MSNTAQNEKRLPVGKDISTRRRTAR) is disordered. A compositionally biased stretch (basic and acidic residues) spans 7-19 (NEKRLPVGKDIST).

Belongs to the universal ribosomal protein uL18 family. As to quaternary structure, part of the 50S ribosomal subunit; part of the 5S rRNA/L5/L18/L25 subcomplex. Contacts the 5S and 23S rRNAs.

This is one of the proteins that bind and probably mediate the attachment of the 5S RNA into the large ribosomal subunit, where it forms part of the central protuberance. The polypeptide is Large ribosomal subunit protein uL18 (Corynebacterium jeikeium (strain K411)).